We begin with the raw amino-acid sequence, 267 residues long: HTH-type transcriptional activator CsvR (267 aa).

2 consecutive DNA-binding regions (H-T-H motif) follow at residues 183-204 (AIIADVFNVSEITIRKRLESED) and 230-253 (ISQISNMIGISSASYFIRIFNKHF).

In terms of assembly, homodimer.

Its function is as follows. Transcriptional activator of fimbrial genes in enterotoxigenic E.coli. In Escherichia coli, this protein is HTH-type transcriptional activator CsvR.